The sequence spans 453 residues: MVSNGISNGTNGTNGTTTNGTNGVNGHAALSPLEVLVQDLNKNTTTLNGYLRANKLPEPSFERDAPIINLSPDAPEEAQVAKEKVLDSALQIFQLVSGPGEYLQNVITGYHYMEILRWMSHFKIFELVPLEGKISYTELASKAGVAELRLKTLARMGMTNHLFAEPEPGFIAHSATSAALVTNNRFSDQRVWMTSIIAPVIASMVTAHERWPDSTAPNKAAFNAAFNTDLRMYEYISKQPDVYKLFGRVMDAIATSPKSDLKHLVSGFDWAGLGKANVVDIGGNIGHSCVKLAEAFPDLNFIIQDIPHVVEEGAKVIKENNEASIANRIQFQEYDFFQKQPVVGADIYLLRQIFHNWDFENSVKILKNTVESMGQNSHVLIMDFVVPEPGTVSSVNERVLRSRDVGMMQLFNSLERDLEGWKAILEAVDSRLKINAVNTPYGSFMSVIDVVLG.

The segment at 1 to 25 is disordered; the sequence is MVSNGISNGTNGTNGTTTNGTNGVN. A compositionally biased stretch (low complexity) spans 8 to 25; the sequence is NGTNGTNGTTTNGTNGVN. Asp-305 lines the S-adenosyl-L-methionine pocket. The active-site Proton acceptor is the His-355.

This sequence belongs to the class I-like SAM-binding methyltransferase superfamily. Cation-independent O-methyltransferase family. COMT subfamily.

It participates in secondary metabolite biosynthesis. Its function is as follows. O-methyltransferase; part of the gene cluster that mediates the biosynthesis of bikaverin, a red pigment also considered as a mycotoxin. The first stage is catalyzed by the polyketide synthase bik1, which catalyzes the formation of the intermediate SMA76a also knowm as pre-bikaverin. FAD-dependent monooxygenase bik2 might then be responsible for the oxidation of pre-bikaverin to oxo-pre-bikaverin which is in turn methylated by the O-methyltransferase bik3 to me-oxo-pre-bikaverin. A further cycle of oxydation and methylation by bik2 and bik3 leads to the final product of bikaverin, via a nor-bikaverin intermediate. This is O-methyltransferase bik3 from Gibberella fujikuroi (strain CBS 195.34 / IMI 58289 / NRRL A-6831) (Bakanae and foot rot disease fungus).